The primary structure comprises 445 residues: FAS-associated factor 2 (445 aa).

An N-acetylalanine modification is found at alanine 2. Positions 12 to 48 (EQTEKLLQFQDLTGIESMDQCRHTLEQHNWNIEAAVQ) constitute a UBA domain. The residue at position 167 (lysine 167) is an N6-acetyllysine. Positions 275-350 (SERLEREERN…EEKERKLECL (76 aa)) form a coiled coil. The interval 299–361 (ASLRADQEKE…PEPSPDDPES (63 aa)) is disordered. Over residues 303–348 (ADQEKERKKREERERKRRKEEEVQQQKLAEERRRRNLQEEKERKLE) the composition is skewed to basic and acidic residues. Residues 357–439 (DDPESVKIIF…GLSHTEVLFV (83 aa)) form the UBX domain.

As to quaternary structure, identified in a complex that contains SEL1L, OS9, FAF2/UBXD8, UBE2J1/UBC6E and AUP1. Interacts with YOD1. Interacts (via N-terminus) with UBQLN2 (via C-terminus). Interacts with PNPLA2 and UBAC2. Interacts with ZFAND2B; probably through VCP. Interacts with LMBR1L.

It localises to the cytoplasm. It is found in the lipid droplet. The protein resides in the endoplasmic reticulum. In terms of biological role, plays an important role in endoplasmic reticulum-associated degradation (ERAD) that mediates ubiquitin-dependent degradation of misfolded endoplasmic reticulum proteins. By controlling the steady-state expression of the IGF1R receptor, indirectly regulates the insulin-like growth factor receptor signaling pathway. Involved in inhibition of lipid droplet degradation by binding to phospholipase PNPL2 and inhibiting its activity by promoting dissociation of PNPL2 from its endogenous activator, ABHD5 which inhibits the rate of triacylglycerol hydrolysis. Involved in stress granule disassembly: associates with ubiquitinated G3BP1 in response to heat shock, thereby promoting interaction between ubiquitinated G3BP1 and VCP, followed by G3BP1 extraction from stress granules and stress granule disassembly. The sequence is that of FAS-associated factor 2 (FAF2) from Bos taurus (Bovine).